The chain runs to 481 residues: Glutamate--tRNA ligase (481 aa).

The short motif at 11-21 is the 'HIGH' region element; it reads PSPTGLLHIGN. The 'KMSKS' region motif lies at 255 to 259; sequence KLSKR. K258 contacts ATP.

Belongs to the class-I aminoacyl-tRNA synthetase family. Glutamate--tRNA ligase type 1 subfamily. Monomer.

The protein resides in the cytoplasm. It catalyses the reaction tRNA(Glu) + L-glutamate + ATP = L-glutamyl-tRNA(Glu) + AMP + diphosphate. Catalyzes the attachment of glutamate to tRNA(Glu) in a two-step reaction: glutamate is first activated by ATP to form Glu-AMP and then transferred to the acceptor end of tRNA(Glu). The chain is Glutamate--tRNA ligase from Streptococcus pyogenes serotype M6 (strain ATCC BAA-946 / MGAS10394).